A 113-amino-acid chain; its full sequence is U11-theraphotoxin-Hhn1a (113 aa).

Positions 1 to 21 are cleaved as a signal peptide; that stretch reads MNTVRVTFLLVFVLAVSLGQA. A propeptide spanning residues 22 to 74 is cleaved from the precursor; the sequence is DKDENRMEMQEKTEQGRSYLDFAENLLLQKLEELEAKLLEEDSEESRNSRQKR. The disordered stretch occupies residues 61 to 83; that stretch reads EEDSEESRNSRQKRCIGEGVPCD. Disulfide bonds link C75/C90, C82/C95, and C89/C110.

It belongs to the neurotoxin 14 (magi-1) family. 01 (HNTX-16) subfamily. In terms of tissue distribution, expressed by the venom gland.

Its subcellular location is the secreted. Its function is as follows. Probable ion channel inhibitor. In Cyriopagopus hainanus (Chinese bird spider), this protein is U11-theraphotoxin-Hhn1a.